Consider the following 299-residue polypeptide: HTH-type transcriptional regulator ArgP (299 aa).

Residues 2–58 enclose the HTH lysR-type domain; sequence FDYKLLSALAAVIEQAGFERAAQVLGLSQSAISQRIKLLEARVGQPVLVRVTPPAPT. A DNA-binding region (H-T-H motif) is located at residues 19 to 38; it reads FERAAQVLGLSQSAISQRIK.

The protein belongs to the LysR transcriptional regulatory family. In terms of assembly, homodimer.

In terms of biological role, controls the transcription of genes involved in arginine and lysine metabolism. This is HTH-type transcriptional regulator ArgP from Pseudomonas fluorescens (strain ATCC BAA-477 / NRRL B-23932 / Pf-5).